The sequence spans 496 residues: MDAPTLSELEGLRYSELQKLAKTAGLKANLKADKLLKALKVHFYPESKDESPDSDGCTSLTDTDELNSSQEKEEPVSVSFVTHRRGRGRKPLQNQAIPKDEFLSDSAGVGSESLASEIDNTQDKDCLESKKKEVSLPILDNKHKKRSRSQDTSKQNNSETTEKRQKKASNVSSIPSAGKIPRYVGRLSKPGSKPSTPNFKKLHEAHFKKMESIDKFMERKQKRLDAVSSSIQEVKMLTKKSNLLKLVEKTPVSDIKKPVKSRLSLLSPLPRTTGASPSRTPMSRRRSGRFSTANKSILVDRSGFKPSVLSSSKMNVRFSEATKDNEYKRSLIKTPARKSSSFLPITPKSEPRQTLSSIKKTDLLTSPEKAKKPDHNTTIQPSPAITESPCQQNKANTPFKFMAQNTETPNTNKKGSFDLQASLSRPLGYQPHRGKLKPWGESKENKSGSNSNVSVLKNNFKQPQLQTREERRKQHELDRKGKRDQALGTRRGVPVK.

Disordered regions lie at residues 44–206 (YPES…HEAH), 250–294 (TPVS…STAN), and 338–496 (KSSS…VPVK). A compositionally biased stretch (polar residues) spans 56-69 (GCTSLTDTDELNSS). Residues 121 to 134 (TQDKDCLESKKKEV) show a composition bias toward basic and acidic residues. Residues 150 to 159 (QDTSKQNNSE) are compositionally biased toward polar residues. Positions 261-281 (SRLSLLSPLPRTTGASPSRTP) are enriched in low complexity. Composition is skewed to polar residues over residues 376 to 396 (NTTI…NKAN) and 403 to 423 (AQNT…QASL). A compositionally biased stretch (low complexity) spans 447-459 (SGSNSNVSVLKNN). Residues 467–485 (TREERRKQHELDRKGKRDQ) show a composition bias toward basic and acidic residues.

This sequence belongs to the NUSAP family. In terms of assembly, interacts with DNA, microtubules, ipo7, kpna2 and kpnb1. Microtubule stabilization is inhibited by ipo7 and kpna2, while microtubule bundling is inhibited by kpnb1. Active GTP-bound ran causes dissociation of ipo7 and kpnb1.

The protein resides in the cytoplasm. It localises to the nucleus. Its subcellular location is the cytoskeleton. It is found in the spindle. Its function is as follows. Microtubule-associated protein with the capacity to bundle and stabilize microtubules. May associate with chromosomes and promote the organization of meiotic or mitotic spindle microtubules around them. The chain is Nucleolar and spindle-associated protein 1-B (nusap1-b) from Xenopus laevis (African clawed frog).